We begin with the raw amino-acid sequence, 209 residues long: Ribonuclease HII (209 aa).

Positions 19–209 constitute an RNase H type-2 domain; that stretch reads CTIVGVDEVG…ASGITKLYNK (191 aa). A divalent metal cation contacts are provided by D25, E26, and D118.

The protein belongs to the RNase HII family. The cofactor is Mn(2+). Mg(2+) serves as cofactor.

It is found in the cytoplasm. It catalyses the reaction Endonucleolytic cleavage to 5'-phosphomonoester.. Its function is as follows. Endonuclease that specifically degrades the RNA of RNA-DNA hybrids. This Ehrlichia chaffeensis (strain ATCC CRL-10679 / Arkansas) protein is Ribonuclease HII.